The chain runs to 445 residues: KIN17-like protein (445 aa).

The segment at 26–50 (WYCQLCEKQCRDENGFKCHISSESH) adopts a C2H2-type zinc-finger fold. Low complexity-rich tracts occupy residues 215–229 (NTTTTTTNTTTTTTN) and 239–253 (NDNNSSNNNYNDQTN). The disordered stretch occupies residues 215-256 (NTTTTTTNTTTTTTNKNIFDKLKTNDNNSSNNNYNDQTNPKP).

Belongs to the KIN17 family.

This Dictyostelium discoideum (Social amoeba) protein is KIN17-like protein.